A 206-amino-acid polypeptide reads, in one-letter code: Protein PH0010 (206 aa).

The AMMECR1 domain maps to Glu-8 to Arg-202.

The sequence is that of Protein PH0010 from Pyrococcus horikoshii (strain ATCC 700860 / DSM 12428 / JCM 9974 / NBRC 100139 / OT-3).